We begin with the raw amino-acid sequence, 395 residues long: MRAKAASGKAIIVLCLASFLAGSLFMSRTLSRSYIPEEEDHHLTKHLSKHLEIQKDCDEHKRKLIESKSRDIIGEVSRTHQAVKSLERTMSTLEMELAAARTSDRSSEFWSERSAKNQSRLQKVFAVIGINTAFSSKKRRDSVRQTWMPTGEKLKKIEKEKGIVVRFVIGHSATPGGVLDKAIDEEDSEHKDFLRLKHIEGYHQLSTKTRLYFSTATAMYDAEFYVKVDDDVHVNLGMLVTTLARYQSRPRIYIGCMKSGPVLSQKGVKYHEPEFWKFGEEGNKYFRHATGQIYAISKDLATYISTNQGILHRYANEDVSLGAWMLGLEVEHVDERSMCCGTPPDCQWKAQAGNVCAASFDWSCSGICKSVDRMARVHRACAEGDTPLANFRFFV.

A helical; Signal-anchor for type II membrane protein membrane pass occupies residues 5 to 27 (AASGKAIIVLCLASFLAGSLFMS). An N-linked (GlcNAc...) asparagine glycan is attached at Asn117.

The protein belongs to the glycosyltransferase 31 family. The cofactor is Mn(2+).

The protein resides in the golgi apparatus membrane. Its pathway is protein modification; protein glycosylation. Beta-1,3-galactosyltransferase that transfers galactose from UDP-galactose to substrates with a terminal glycosyl residue. The polypeptide is Probable beta-1,3-galactosyltransferase 8 (B3GALT8) (Arabidopsis thaliana (Mouse-ear cress)).